The primary structure comprises 173 residues: Probable DNA-directed RNA polymerase subunit delta (173 aa).

Positions 14–81 (NSFIDLAYMA…GEYMWGLRDW (68 aa)) constitute an HTH HARE-type domain. The segment at 113–173 (LLGEDEVEDE…DEFDDEEEEE (61 aa)) is disordered. A compositionally biased stretch (acidic residues) spans 115-173 (GEDEVEDELDLLPSDGDEENVDTEDEEVEDELDEAGLVVEPDEEFEDEEDEFDDEEEEE).

This sequence belongs to the RpoE family. In terms of assembly, RNAP is composed of a core of 2 alpha, a beta and a beta' subunits. The core is associated with a delta subunit and one of several sigma factors.

In terms of biological role, participates in both the initiation and recycling phases of transcription. In the presence of the delta subunit, RNAP displays an increased specificity of transcription, a decreased affinity for nucleic acids, and an increased efficiency of RNA synthesis because of enhanced recycling. In Macrococcus caseolyticus (strain JCSC5402) (Macrococcoides caseolyticum), this protein is Probable DNA-directed RNA polymerase subunit delta.